The primary structure comprises 274 residues: 2,3,4,5-tetrahydropyridine-2,6-dicarboxylate N-succinyltransferase (274 aa).

The protein belongs to the transferase hexapeptide repeat family.

The protein resides in the cytoplasm. It carries out the reaction (S)-2,3,4,5-tetrahydrodipicolinate + succinyl-CoA + H2O = (S)-2-succinylamino-6-oxoheptanedioate + CoA. The protein operates within amino-acid biosynthesis; L-lysine biosynthesis via DAP pathway; LL-2,6-diaminopimelate from (S)-tetrahydrodipicolinate (succinylase route): step 1/3. The protein is 2,3,4,5-tetrahydropyridine-2,6-dicarboxylate N-succinyltransferase of Salmonella heidelberg (strain SL476).